Here is a 149-residue protein sequence, read N- to C-terminus: Large ribosomal subunit protein bL9 (149 aa).

This sequence belongs to the bacterial ribosomal protein bL9 family.

In terms of biological role, binds to the 23S rRNA. The polypeptide is Large ribosomal subunit protein bL9 (Campylobacter curvus (strain 525.92)).